The following is a 309-amino-acid chain: Ornithine carbamoyltransferase (309 aa).

Carbamoyl phosphate contacts are provided by residues serine 51–threonine 54, glutamine 78, arginine 102, and histidine 129–glutamine 132. Residues asparagine 160, aspartate 224, and serine 228 to methionine 229 contribute to the L-ornithine site. Residues cysteine 264–leucine 265 and arginine 292 contribute to the carbamoyl phosphate site.

It belongs to the aspartate/ornithine carbamoyltransferase superfamily. OTCase family.

It localises to the cytoplasm. It carries out the reaction carbamoyl phosphate + L-ornithine = L-citrulline + phosphate + H(+). It functions in the pathway amino-acid biosynthesis; L-arginine biosynthesis; L-arginine from L-ornithine and carbamoyl phosphate: step 1/3. Its function is as follows. Reversibly catalyzes the transfer of the carbamoyl group from carbamoyl phosphate (CP) to the N(epsilon) atom of ornithine (ORN) to produce L-citrulline. In Campylobacter fetus subsp. fetus (strain 82-40), this protein is Ornithine carbamoyltransferase.